The sequence spans 164 residues: Putative Cys-tRNA(Pro)/Cys-tRNA(Cys) deacylase EbsC (164 aa).

It belongs to the prolyl-tRNA editing family. YbaK/EbsC subfamily.

Its function is as follows. Affects the expression of the receptor, named binding substance, that mediates mating aggregate formation. Could be a regulatory protein that suppresses the function or expression of ebsA and/or ebsMB. This Enterococcus faecalis (strain ATCC 700802 / V583) protein is Putative Cys-tRNA(Pro)/Cys-tRNA(Cys) deacylase EbsC.